Here is an 88-residue protein sequence, read N- to C-terminus: Small ribosomal subunit protein bS20 (88 aa).

The interval 1 to 33 is disordered; it reads MANTSSAKKATRKIARRTAVNKSRRTQMRGSVR.

The protein belongs to the bacterial ribosomal protein bS20 family.

Its function is as follows. Binds directly to 16S ribosomal RNA. The polypeptide is Small ribosomal subunit protein bS20 (Rhodopseudomonas palustris (strain BisB5)).